Reading from the N-terminus, the 247-residue chain is Adenosylcobinamide-GDP ribazoletransferase (247 aa).

The next 6 membrane-spanning stretches (helical) occupy residues 31 to 51 (ILFY…VTCI), 55 to 75 (LPAL…TGGL), 109 to 129 (IGVL…YVLI), 135 to 155 (LFLI…FLTT), 183 to 203 (VLLL…SFLI), and 227 to 247 (AIEI…FYLV).

This sequence belongs to the CobS family. It depends on Mg(2+) as a cofactor.

It localises to the cell inner membrane. The catalysed reaction is alpha-ribazole + adenosylcob(III)inamide-GDP = adenosylcob(III)alamin + GMP + H(+). It catalyses the reaction alpha-ribazole 5'-phosphate + adenosylcob(III)inamide-GDP = adenosylcob(III)alamin 5'-phosphate + GMP + H(+). It functions in the pathway cofactor biosynthesis; adenosylcobalamin biosynthesis; adenosylcobalamin from cob(II)yrinate a,c-diamide: step 7/7. Its function is as follows. Joins adenosylcobinamide-GDP and alpha-ribazole to generate adenosylcobalamin (Ado-cobalamin). Also synthesizes adenosylcobalamin 5'-phosphate from adenosylcobinamide-GDP and alpha-ribazole 5'-phosphate. The protein is Adenosylcobinamide-GDP ribazoletransferase of Acinetobacter baumannii (strain ACICU).